Consider the following 72-residue polypeptide: MSAIFNFQSLLTVILLLICTCAYIRSLAPSLLDKNKTGLLGIFWKCARIGERKSPYVAVCCVVMAFSILFVQ.

The first 26 residues, 1–26 (MSAIFNFQSLLTVILLLICTCAYIRS), serve as a signal peptide directing secretion. Residues 27–53 (LAPSLLDKNKTGLLGIFWKCARIGERK) lie on the Extracellular side of the membrane. N-linked (GlcNAc...) asparagine glycosylation occurs at Asn35. Residues 54–71 (SPYVAVCCVVMAFSILFV) traverse the membrane as a helical segment. Gln72 is a topological domain (cytoplasmic).

This sequence belongs to the KISH family.

The protein resides in the golgi apparatus membrane. Functionally, involved in the early part of the secretory pathway. This is Protein kish-A (TMEM167A) from Gallus gallus (Chicken).